The sequence spans 281 residues: Probable endonuclease 4 (281 aa).

Residues H69, H109, E145, D179, H182, H216, D229, H231, and E261 each coordinate Zn(2+).

The protein belongs to the AP endonuclease 2 family. Zn(2+) is required as a cofactor.

It carries out the reaction Endonucleolytic cleavage to 5'-phosphooligonucleotide end-products.. Endonuclease IV plays a role in DNA repair. It cleaves phosphodiester bonds at apurinic or apyrimidinic (AP) sites, generating a 3'-hydroxyl group and a 5'-terminal sugar phosphate. The polypeptide is Probable endonuclease 4 (Aeromonas salmonicida (strain A449)).